Consider the following 98-residue polypeptide: Small ribosomal subunit protein uS17 (98 aa).

It belongs to the universal ribosomal protein uS17 family. As to quaternary structure, part of the 30S ribosomal subunit.

One of the primary rRNA binding proteins, it binds specifically to the 5'-end of 16S ribosomal RNA. This is Small ribosomal subunit protein uS17 from Synechococcus sp. (strain CC9605).